A 249-amino-acid chain; its full sequence is tRNA (guanine-N(1)-)-methyltransferase (249 aa).

S-adenosyl-L-methionine contacts are provided by residues Gly-113 and 133 to 138; that span reads IGDFVL.

The protein belongs to the RNA methyltransferase TrmD family. As to quaternary structure, homodimer.

The protein localises to the cytoplasm. It carries out the reaction guanosine(37) in tRNA + S-adenosyl-L-methionine = N(1)-methylguanosine(37) in tRNA + S-adenosyl-L-homocysteine + H(+). Its function is as follows. Specifically methylates guanosine-37 in various tRNAs. This Aliivibrio salmonicida (strain LFI1238) (Vibrio salmonicida (strain LFI1238)) protein is tRNA (guanine-N(1)-)-methyltransferase.